The chain runs to 455 residues: Dihydrolipoyllysine-residue succinyltransferase component of 2-oxoglutarate dehydrogenase complex, mitochondrial (455 aa).

The N-terminal 68 residues, 1–68 (MLSRSRCASR…RFFRTTAVCK (68 aa)), are a transit peptide targeting the mitochondrion. The region spanning 71–145 (VITVKTPAFA…EGGTPLFTLR (75 aa)) is the Lipoyl-binding domain. Serine 82 is modified (phosphoserine). Lysine 111 is modified (N6-lipoyllysine). N6-acetyllysine is present on lysine 155. Low complexity predominate over residues 155 to 173 (KPAAAPAAAAPKAEPTVSA). A disordered region spans residues 155-220 (KPAAAPAAAA…PRAEAGAGVG (66 aa)). A compositionally biased stretch (pro residues) spans 174–193 (VPPPPAAPIPTQMPPVPSPS). An N6-acetyllysine mark is found at lysine 269, lysine 274, lysine 275, lysine 279, and lysine 309. Active-site residues include histidine 426 and aspartate 430.

The protein belongs to the 2-oxoacid dehydrogenase family. As to quaternary structure, the 2-oxoglutarate dehydrogenase complex is composed of OGDH (2-oxoglutarate dehydrogenase; E1), DLST (dihydrolipoamide succinyltransferase; E2), DLD (dihydrolipoamide dehydrogenase; E3) and the assembly factor KGD4. It contains multiple copies of the three enzymatic components (E1, E2 and E3). In the nucleus, the 2-oxoglutarate dehydrogenase complex associates with KAT2A. Interacts with ABHD11; this interaction maintains the functional lipoylation of the 2-oxoglutarate dehydrogenase complex. (R)-lipoate is required as a cofactor.

Its subcellular location is the mitochondrion matrix. The protein localises to the nucleus. The enzyme catalyses N(6)-[(R)-dihydrolipoyl]-L-lysyl-[protein] + succinyl-CoA = N(6)-[(R)-S(8)-succinyldihydrolipoyl]-L-lysyl-[protein] + CoA. The protein operates within amino-acid degradation; L-lysine degradation via saccharopine pathway; glutaryl-CoA from L-lysine: step 6/6. It functions in the pathway carbohydrate metabolism; tricarboxylic acid cycle. Dihydrolipoamide succinyltransferase (E2) component of the 2-oxoglutarate dehydrogenase complex. The 2-oxoglutarate dehydrogenase complex catalyzes the overall conversion of 2-oxoglutarate to succinyl-CoA and CO(2). The 2-oxoglutarate dehydrogenase complex is mainly active in the mitochondrion. A fraction of the 2-oxoglutarate dehydrogenase complex also localizes in the nucleus and is required for lysine succinylation of histones: associates with KAT2A on chromatin and provides succinyl-CoA to histone succinyltransferase KAT2A. In Bos taurus (Bovine), this protein is Dihydrolipoyllysine-residue succinyltransferase component of 2-oxoglutarate dehydrogenase complex, mitochondrial.